A 383-amino-acid polypeptide reads, in one-letter code: 8-amino-7-oxononanoate synthase (383 aa).

Arg22 contributes to the substrate binding site. Residue 109–110 participates in pyridoxal 5'-phosphate binding; the sequence is GF. Position 134 (His134) interacts with substrate. Residues Ser178, His206, and Thr232 each contribute to the pyridoxal 5'-phosphate site. Lys235 carries the post-translational modification N6-(pyridoxal phosphate)lysine. Thr348 is a substrate binding site.

This sequence belongs to the class-II pyridoxal-phosphate-dependent aminotransferase family. BioF subfamily. In terms of assembly, homodimer. Pyridoxal 5'-phosphate is required as a cofactor.

It carries out the reaction 6-carboxyhexanoyl-[ACP] + L-alanine + H(+) = (8S)-8-amino-7-oxononanoate + holo-[ACP] + CO2. It participates in cofactor biosynthesis; biotin biosynthesis. Catalyzes the decarboxylative condensation of pimeloyl-[acyl-carrier protein] and L-alanine to produce 8-amino-7-oxononanoate (AON), [acyl-carrier protein], and carbon dioxide. The chain is 8-amino-7-oxononanoate synthase from Vibrio parahaemolyticus serotype O3:K6 (strain RIMD 2210633).